Here is a 686-residue protein sequence, read N- to C-terminus: MNIESKIKEFTDQLNQFAYEYYTLDEPSVEDSEYDRLYHELVKLEQENPQLVRADSPTHWTGGVILDGFVKFRHPYNLYSLGDVFSREELALWEERVRKEIVNPEYICELKIDGLSLSLYYENGLLVTAATRGDGTTGENITENVKRIKDVPLKLKEAIDIVVRGEAYLPRQNFAKLNAERELAGAAPFANPRNAAAGTLRQLDTKIVAKRGLATFLYQEASPATNDTQEEVLEYFEELGFQVNPERKFARNLDEIWEFIEEATRLRDELPYDIDGVVIKVNNLAEQEELGFTVKAPRWAIAYKFPAEQAETEILSVDWTVGRTGVVTPTANMTPVLLAQTTVARATLHNVDYIQEKDIRNHDKVMIYKAGDIIPKVGKVLLEKRKPAKHLRKTHRANKYVWTRFGRRSVEKGLVFSKREDNRVKIPTQCPECDSDLIHFEDEVALRCVNPLCPAQIREKLIHFASRDAMNIVGLGPSVISQLFDKKLVTDVADLYQLTVEDLLTLDKVKETLAQKIVSAIAQSRENSAEKLLFGLGIRHVGGKAAKLLLERFANLRALSQASEEEISEIPSLGGVIATAVVSYFETAGAKTLLDELENAGLNFAYLGAVNVEGILSGKTVVLTGKLTTLKRKEAKEKLEALGANVSGSVSKKTDLVVAGEEAGSKLTKAQDLGIEIWSEQDLLDL.

Residues aspartate 31–aspartate 35, serine 80–leucine 81, and glutamate 109 contribute to the NAD(+) site. The active-site N6-AMP-lysine intermediate is lysine 111. Residues arginine 132, glutamate 166, lysine 280, and lysine 304 each coordinate NAD(+). Cysteine 430, cysteine 433, cysteine 448, and cysteine 453 together coordinate Zn(2+). The BRCT domain occupies asparagine 611–leucine 686.

It belongs to the NAD-dependent DNA ligase family. LigA subfamily. Mg(2+) serves as cofactor. Mn(2+) is required as a cofactor.

It carries out the reaction NAD(+) + (deoxyribonucleotide)n-3'-hydroxyl + 5'-phospho-(deoxyribonucleotide)m = (deoxyribonucleotide)n+m + AMP + beta-nicotinamide D-nucleotide.. DNA ligase that catalyzes the formation of phosphodiester linkages between 5'-phosphoryl and 3'-hydroxyl groups in double-stranded DNA using NAD as a coenzyme and as the energy source for the reaction. It is essential for DNA replication and repair of damaged DNA. This chain is DNA ligase, found in Lactococcus lactis subsp. cremoris (strain SK11).